The sequence spans 602 residues: mRNA-capping enzyme subunit beta (602 aa).

A disordered region spans residues 1–249; it reads MSEHHSKRAL…NESNSEETHD (249 aa). Residues 15 to 42 are compositionally biased toward basic and acidic residues; it reads LVNHDENDKSKLQKLADNESSVRSDDNR. Positions 48–64 are enriched in low complexity; that stretch reads NIVNGNNSNSDLNSNGV. Over residues 65-76 the composition is skewed to acidic residues; that stretch reads IEEDTDTDDDVG. Positions 88–110 are enriched in basic and acidic residues; that stretch reads DYDKQDRFSPEKKRIQARKKDTS. Residues 114–128 show a composition bias toward low complexity; sequence PSISNESPSNSKESS. The segment covering 141 to 169 has biased composition (basic and acidic residues); that stretch reads TDRKDSSEEKPDLTGPELVKEPDTNEYKR. A compositionally biased stretch (polar residues) spans 171–181; the sequence is SIQSITNAEDT. 2 stretches are compositionally biased toward basic and acidic residues: residues 213–222 and 231–249; these read TEEHKPKTET and QENKQKDNVNESNSEETHD. K276 acts as the N6-GMP-lysine intermediate in catalysis.

The protein belongs to the fungal TPase family. As to quaternary structure, heterodimer. The mRNA-capping enzyme is composed of two separate chains alpha and beta, respectively a mRNA guanylyltransferase and an mRNA 5'-triphosphate monophosphatase. It depends on Mg(2+) as a cofactor.

It localises to the nucleus. It catalyses the reaction a 5'-end triphospho-ribonucleoside in mRNA + H2O = a 5'-end diphospho-ribonucleoside in mRNA + phosphate + H(+). In terms of biological role, first step of mRNA capping. Converts the 5'-triphosphate end of a nascent mRNA chain into a diphosphate end. In Candida glabrata (strain ATCC 2001 / BCRC 20586 / JCM 3761 / NBRC 0622 / NRRL Y-65 / CBS 138) (Yeast), this protein is mRNA-capping enzyme subunit beta (CET1).